Reading from the N-terminus, the 307-residue chain is Ornithine carbamoyltransferase (307 aa).

Carbamoyl phosphate is bound by residues 50 to 53 (STRT), Gln77, Arg101, and 128 to 131 (HPCQ). L-ornithine-binding positions include Asn160, Asp224, and 228–229 (SM). Residues 264–265 (CL) and Arg292 contribute to the carbamoyl phosphate site.

The protein belongs to the aspartate/ornithine carbamoyltransferase superfamily. OTCase family.

The protein resides in the cytoplasm. The catalysed reaction is carbamoyl phosphate + L-ornithine = L-citrulline + phosphate + H(+). Its pathway is amino-acid biosynthesis; L-arginine biosynthesis; L-arginine from L-ornithine and carbamoyl phosphate: step 1/3. Its function is as follows. Reversibly catalyzes the transfer of the carbamoyl group from carbamoyl phosphate (CP) to the N(epsilon) atom of ornithine (ORN) to produce L-citrulline. The sequence is that of Ornithine carbamoyltransferase from Mycolicibacterium gilvum (strain PYR-GCK) (Mycobacterium gilvum (strain PYR-GCK)).